A 436-amino-acid chain; its full sequence is Acetyl-CoA decarbonylase/synthase complex subunit delta 1 (436 aa).

Belongs to the CdhD family. In terms of assembly, heterodimer of delta and gamma chains. The ACDS complex is made up of alpha, epsilon, beta, gamma and delta chains with a probable stoichiometry of (alpha(2)epsilon(2))(4)-beta(8)-(gamma(1)delta(1))(8) (Potential).

The protein operates within one-carbon metabolism; methanogenesis from acetate. Its function is as follows. Part of a complex that catalyzes the reversible cleavage of acetyl-CoA, allowing growth on acetate as sole source of carbon and energy. Probably maintains the overall quaternary structure of the ACDS complex. The protein is Acetyl-CoA decarbonylase/synthase complex subunit delta 1 (cdhD1) of Methanosarcina acetivorans (strain ATCC 35395 / DSM 2834 / JCM 12185 / C2A).